Consider the following 168-residue polypeptide: Probable chorismate pyruvate-lyase (168 aa).

Substrate contacts are provided by arginine 75, isoleucine 114, and glutamate 155.

The protein belongs to the UbiC family.

It is found in the cytoplasm. The catalysed reaction is chorismate = 4-hydroxybenzoate + pyruvate. The protein operates within cofactor biosynthesis; ubiquinone biosynthesis. Removes the pyruvyl group from chorismate, with concomitant aromatization of the ring, to provide 4-hydroxybenzoate (4HB) for the ubiquinone pathway. This is Probable chorismate pyruvate-lyase from Psychrobacter cryohalolentis (strain ATCC BAA-1226 / DSM 17306 / VKM B-2378 / K5).